The following is a 431-amino-acid chain: 3-phosphoshikimate 1-carboxyvinyltransferase (431 aa).

The 3-phosphoshikimate site is built by K26, S27, and R31. K26 lines the phosphoenolpyruvate pocket. G99 and R127 together coordinate phosphoenolpyruvate. 3-phosphoshikimate-binding residues include S170, S171, Q172, S199, E314, and H343. Q172 contributes to the phosphoenolpyruvate binding site. Catalysis depends on E314, which acts as the Proton acceptor. Phosphoenolpyruvate is bound by residues R347, R388, and K413.

The protein belongs to the EPSP synthase family. As to quaternary structure, monomer.

It localises to the cytoplasm. It catalyses the reaction 3-phosphoshikimate + phosphoenolpyruvate = 5-O-(1-carboxyvinyl)-3-phosphoshikimate + phosphate. The protein operates within metabolic intermediate biosynthesis; chorismate biosynthesis; chorismate from D-erythrose 4-phosphate and phosphoenolpyruvate: step 6/7. Its function is as follows. Catalyzes the transfer of the enolpyruvyl moiety of phosphoenolpyruvate (PEP) to the 5-hydroxyl of shikimate-3-phosphate (S3P) to produce enolpyruvyl shikimate-3-phosphate and inorganic phosphate. The sequence is that of 3-phosphoshikimate 1-carboxyvinyltransferase from Mycobacterium marinum (strain ATCC BAA-535 / M).